The following is a 553-amino-acid chain: uncharacterized protein (553 aa).

The N-terminal stretch at 1–28 is a signal peptide; sequence MRYARHASRYSLFTLAVSAALLPGAGWA.

This is an uncharacterized protein from Pseudomonas aeruginosa (strain ATCC 15692 / DSM 22644 / CIP 104116 / JCM 14847 / LMG 12228 / 1C / PRS 101 / PAO1).